The primary structure comprises 576 residues: DNA mismatch repair protein MutL (576 aa).

Belongs to the DNA mismatch repair MutL/HexB family.

Its function is as follows. This protein is involved in the repair of mismatches in DNA. It is required for dam-dependent methyl-directed DNA mismatch repair. May act as a 'molecular matchmaker', a protein that promotes the formation of a stable complex between two or more DNA-binding proteins in an ATP-dependent manner without itself being part of a final effector complex. This Chlamydia trachomatis serovar L2 (strain ATCC VR-902B / DSM 19102 / 434/Bu) protein is DNA mismatch repair protein MutL.